Consider the following 111-residue polypeptide: EGDVAKGEAAFKRCSACHAIGEGAKNKVGPQLNGIIGRTAGGDPDYNYSNAMKKAGGEGLVWTPQELRDFLSAPKKKIPGNKMALAGISKPEELDNLIAYLIFSASSKPAZ.

Heme c contacts are provided by Cys14, Cys17, His18, and Met83.

The protein belongs to the cytochrome c family. Binds 1 heme c group covalently per subunit.

Functionally, cytochrome c2 is found mainly in purple, non-sulfur, photosynthetic bacteria where it functions as the electron donor to the oxidized bacteriochlorophyll in the photophosphorylation pathway. However, it may also have a role in the respiratory chain and is found in some non-photosynthetic bacteria. This is Cytochrome c2 from Agrobacterium tumefaciens (strain II Chrys).